The following is a 210-amino-acid chain: MRRLPWLIPFFLVNISNGNNEFRIEFEYPNNEKSEKCFDSSKENDLLDLFYVSTNPLGPVVECRFLENSFILCEDPVPLYGPGQTGQQPANESFRNEGKCLKMGGYRAEDVEFTNVKCRVLPCIECHGPRTFTKSTPCIIYNGHYFLTTLLYSIFLGVVAVDRFCLGYSAMAVGKLMTLGGFGIWWIVDIFLLVLGVLGPADDSSWEPYY.

The first 18 residues, Met1–Gly18, serve as a signal peptide directing secretion. Topologically, residues Asn19–Cys138 are extracellular. N-linked (GlcNAc...) asparagine glycosylation is present at Asn91. The helical transmembrane segment at Ile139 to Val159 threads the bilayer. In terms of domain architecture, TM2 spans Gly143–Phe191. The Cytoplasmic portion of the chain corresponds to Ala160–Thr178. Residues Leu179 to Gly199 traverse the membrane as a helical segment. At Pro200–Tyr210 the chain is on the extracellular side.

Belongs to the TM2 family.

Its subcellular location is the membrane. The sequence is that of TM2 domain-containing protein C02F5.13 from Caenorhabditis elegans.